A 476-amino-acid polypeptide reads, in one-letter code: Protein EARLY HEADING DATE 2 (476 aa).

Positions 1 to 13 are enriched in polar residues; that stretch reads MLLSDLSSDQEAT. The disordered stretch occupies residues 1-27; it reads MLLSDLSSDQEATGSNSHGGGGGGDRM. C2H2-type zinc fingers lie at residues 106-128 and 156-186; these read FVCEVCNKGFQRDQNLQLHRRGH and YVCPEPTCVHHDPARALGDLTGIKKHFSRKH. 2 consecutive short sequence motifs (nuclear localization signal) follow at residues 124–131 and 178–185; these read HRRGHNLP and IKKHFSRK. The C2H2-type 2; degenerate zinc finger occupies 191-214; it reads WRCERCGKRYAVHSDWKAHVKNCG. Zn(2+)-binding residues include Cys193, Cys196, His209, Cys213, Cys220, Cys222, His235, and Cys239. The CCHC-type 2; atypical zinc-finger motif lies at 218–241; it reads YRCDCGILFSRKDSLLTHRAFCDA. The tract at residues 228–240 is SHR-binding; that stretch reads RKDSLLTHRAFCD.

The protein resides in the nucleus. Functionally, transcription activator that acts as a flowering master switch in both long and short days, independently of the circadian clock. Promotes flowering upstream of HD1 by up-regulating FTL1, FTL4, FTL5, FTL6, EHD1, HD3A and RFT1. Seems to repress FTL11 expression. May recognize the consensus motif 5'-TTTGTCGTAAT-3' in target gene promoters. This Oryza sativa subsp. indica (Rice) protein is Protein EARLY HEADING DATE 2.